An 87-amino-acid chain; its full sequence is MAKGQSLQDPFLNALRRERIPVSIFLVNGIKLQGKIQSFDQFVILLENTVNQMVYKHAISTVVPARAVNFQGVQENDDTEEPEAGNI.

The 60-residue stretch at 9-68 folds into the Sm domain; sequence DPFLNALRRERIPVSIFLVNGIKLQGKIQSFDQFVILLENTVNQMVYKHAISTVVPARAV.

Belongs to the Hfq family. Homohexamer.

Functionally, RNA chaperone that binds small regulatory RNA (sRNAs) and mRNAs to facilitate mRNA translational regulation in response to envelope stress, environmental stress and changes in metabolite concentrations. Also binds with high specificity to tRNAs. This Pseudoalteromonas translucida (strain TAC 125) protein is RNA-binding protein Hfq.